Consider the following 206-residue polypeptide: Ribosomal RNA small subunit methyltransferase G (206 aa).

S-adenosyl-L-methionine contacts are provided by residues glycine 73, leucine 78, 124-125 (VE), and arginine 139.

Belongs to the methyltransferase superfamily. RNA methyltransferase RsmG family.

It is found in the cytoplasm. It carries out the reaction guanosine(527) in 16S rRNA + S-adenosyl-L-methionine = N(7)-methylguanosine(527) in 16S rRNA + S-adenosyl-L-homocysteine. Its function is as follows. Specifically methylates the N7 position of guanine in position 527 of 16S rRNA. This is Ribosomal RNA small subunit methyltransferase G from Serratia proteamaculans (strain 568).